We begin with the raw amino-acid sequence, 71 residues long: Large ribosomal subunit protein bL31 (71 aa).

Residues Cys16, Cys18, Cys37, and Cys40 each coordinate Zn(2+).

Belongs to the bacterial ribosomal protein bL31 family. Type A subfamily. Part of the 50S ribosomal subunit. Requires Zn(2+) as cofactor.

Its function is as follows. Binds the 23S rRNA. This is Large ribosomal subunit protein bL31 from Marinomonas sp. (strain MWYL1).